Consider the following 84-residue polypeptide: Alpha-mammal toxin Ts2 (84 aa).

The signal sequence occupies residues 1–20; it reads MKGFLLFISILMMIGTIVVG. Positions 21–83 constitute an LCN-type CS-alpha/beta domain; that stretch reads KEGYAMDHEG…VWDYATNKCG (63 aa). Disulfide bonds link Cys31–Cys82, Cys35–Cys58, Cys43–Cys63, and Cys47–Cys65. Cys82 carries the post-translational modification Cysteine amide.

Belongs to the long (4 C-C) scorpion toxin superfamily. Sodium channel inhibitor family. Beta subfamily. Expressed by the venom gland.

The protein resides in the secreted. Functionally, alpha toxins bind voltage-independently at site-3 of sodium channels (Nav) and inhibit the inactivation of the activated channels, thereby blocking neuronal transmission. This toxin acts on Nav1.2/SCN2A, Nav1.3/SCN3A, Nav1.5/SCN5A, Nav1.6/SCN8A and Nav1.7/SCN9A voltage-gated sodium channels, with the highest affinity for Nav1.3/SCN3A, followed by Nav1.6/SCN8A and Nav1.7/SCN9A which are affected almost equally. Interestingly, shows a significant shift of the voltage dependence of activation for Nav1.3/SCN3A that is characteristic of beta-toxins. In addition, in presence of LPS, this toxin inhibits the release of NO, IL-6 and TNF-alpha in J774.1 cells. Further, in the absence of LPS, it stimulates the production of the anti-inflammatory cytokine IL-10. This toxin is active on mammals. The chain is Alpha-mammal toxin Ts2 from Tityus serrulatus (Brazilian scorpion).